The primary structure comprises 156 residues: Small ribosomal subunit protein uS7 (156 aa).

The protein belongs to the universal ribosomal protein uS7 family. In terms of assembly, part of the 30S ribosomal subunit. Contacts proteins S9 and S11.

In terms of biological role, one of the primary rRNA binding proteins, it binds directly to 16S rRNA where it nucleates assembly of the head domain of the 30S subunit. Is located at the subunit interface close to the decoding center, probably blocks exit of the E-site tRNA. The protein is Small ribosomal subunit protein uS7 of Phytoplasma australiense.